A 283-amino-acid polypeptide reads, in one-letter code: 2-dehydro-3-deoxyphosphooctonate aldolase (283 aa).

It belongs to the KdsA family.

It is found in the cytoplasm. The enzyme catalyses D-arabinose 5-phosphate + phosphoenolpyruvate + H2O = 3-deoxy-alpha-D-manno-2-octulosonate-8-phosphate + phosphate. Its pathway is carbohydrate biosynthesis; 3-deoxy-D-manno-octulosonate biosynthesis; 3-deoxy-D-manno-octulosonate from D-ribulose 5-phosphate: step 2/3. It functions in the pathway bacterial outer membrane biogenesis; lipopolysaccharide biosynthesis. This chain is 2-dehydro-3-deoxyphosphooctonate aldolase, found in Vibrio campbellii (strain ATCC BAA-1116).